A 249-amino-acid chain; its full sequence is Proteasome subunit alpha (249 aa).

The protein belongs to the peptidase T1A family. In terms of assembly, the 20S proteasome core is composed of 14 alpha and 14 beta subunits that assemble into four stacked heptameric rings, resulting in a barrel-shaped structure. The two inner rings, each composed of seven catalytic beta subunits, are sandwiched by two outer rings, each composed of seven alpha subunits. The catalytic chamber with the active sites is on the inside of the barrel. Has a gated structure, the ends of the cylinder being occluded by the N-termini of the alpha-subunits. Is capped at one or both ends by the proteasome regulatory ATPase, PAN.

It localises to the cytoplasm. The formation of the proteasomal ATPase PAN-20S proteasome complex, via the docking of the C-termini of PAN into the intersubunit pockets in the alpha-rings, triggers opening of the gate for substrate entry. Interconversion between the open-gate and close-gate conformations leads to a dynamic regulation of the 20S proteasome proteolysis activity. Functionally, component of the proteasome core, a large protease complex with broad specificity involved in protein degradation. This is Proteasome subunit alpha from Methanosarcina barkeri (strain Fusaro / DSM 804).